Reading from the N-terminus, the 375-residue chain is Carbamoyl phosphate synthase small chain (375 aa).

The interval M1–E185 is CPSase. Residues S47, G237, and G239 each contribute to the L-glutamine site. The Glutamine amidotransferase type-1 domain maps to K189 to S375. C265 acts as the Nucleophile in catalysis. 5 residues coordinate L-glutamine: L266, Q269, N307, G309, and F310. Residues H349 and E351 contribute to the active site.

The protein belongs to the CarA family. Composed of two chains; the small (or glutamine) chain promotes the hydrolysis of glutamine to ammonia, which is used by the large (or ammonia) chain to synthesize carbamoyl phosphate. Tetramer of heterodimers (alpha,beta)4.

It catalyses the reaction hydrogencarbonate + L-glutamine + 2 ATP + H2O = carbamoyl phosphate + L-glutamate + 2 ADP + phosphate + 2 H(+). The enzyme catalyses L-glutamine + H2O = L-glutamate + NH4(+). It functions in the pathway amino-acid biosynthesis; L-arginine biosynthesis; carbamoyl phosphate from bicarbonate: step 1/1. Its pathway is pyrimidine metabolism; UMP biosynthesis via de novo pathway; (S)-dihydroorotate from bicarbonate: step 1/3. In terms of biological role, small subunit of the glutamine-dependent carbamoyl phosphate synthetase (CPSase). CPSase catalyzes the formation of carbamoyl phosphate from the ammonia moiety of glutamine, carbonate, and phosphate donated by ATP, constituting the first step of 2 biosynthetic pathways, one leading to arginine and/or urea and the other to pyrimidine nucleotides. The small subunit (glutamine amidotransferase) binds and cleaves glutamine to supply the large subunit with the substrate ammonia. This chain is Carbamoyl phosphate synthase small chain, found in Xanthomonas campestris pv. campestris (strain ATCC 33913 / DSM 3586 / NCPPB 528 / LMG 568 / P 25).